A 310-amino-acid polypeptide reads, in one-letter code: Cytosolic Fe-S cluster assembly factor Nubp1 homolog (310 aa).

Residues Cys8, Cys22, Cys25, and Cys31 each coordinate [4Fe-4S] cluster. 62–69 (GKGGVGKS) is an ATP binding site. Cys239 and Cys242 together coordinate [4Fe-4S] cluster.

This sequence belongs to the Mrp/NBP35 ATP-binding proteins family. NUBP1/NBP35 subfamily. In terms of assembly, heterotetramer of 2 Nubp1 and 2 Nubp2 chains. The cofactor is [4Fe-4S] cluster.

The protein resides in the cytoplasm. Component of the cytosolic iron-sulfur (Fe/S) protein assembly (CIA) machinery. Required for maturation of extramitochondrial Fe-S proteins. The Nubp1-Nubp2 heterotetramer forms a Fe-S scaffold complex, mediating the de novo assembly of an Fe-S cluster and its transfer to target apoproteins. The sequence is that of Cytosolic Fe-S cluster assembly factor Nubp1 homolog from Drosophila willistoni (Fruit fly).